The following is a 115-amino-acid chain: Nitrogenase-stabilizing/protective protein NifW (115 aa).

This sequence belongs to the NifW family. In terms of assembly, homotrimer; associates with NifD.

Its function is as follows. May protect the nitrogenase Fe-Mo protein from oxidative damage. The polypeptide is Nitrogenase-stabilizing/protective protein NifW (Stutzerimonas stutzeri (strain A1501) (Pseudomonas stutzeri)).